Here is a 166-residue protein sequence, read N- to C-terminus: Ferric nitrobindin-like protein (166 aa).

Positions Gly-21–Gly-27 match the GXWXGXG motif.

It belongs to the nitrobindin family.

This chain is Ferric nitrobindin-like protein, found in Cutibacterium acnes (strain DSM 16379 / KPA171202) (Propionibacterium acnes).